We begin with the raw amino-acid sequence, 377 residues long: Transcription factor Sox-17-alpha-B (377 aa).

Disordered regions lie at residues 1 to 20 and 31 to 57; these read MSSP…KCSV and QWSE…AEGR. A compositionally biased stretch (basic and acidic residues) spans 42-57; that stretch reads GKLKSDANSRSKAEGR. Residues 58–126 constitute a DNA-binding region (HMG box); sequence IRRPMNAFMV…QHMQDHPNYK (69 aa). Residues 262 to 376 enclose the Sox C-terminal domain; that stretch reads GSPVEGMMAC…TAVYYCNYPS (115 aa). Positions 282–321 are disordered; the sequence is MYLPGSTRHHQHPQAGQPSPPPEAQQLGRADQTQQADMMA. A 9aaTAD motif is present at residues 325-333; that stretch reads TEFEQYLSY. The tract at residues 326-331 is required for transcriptional activity and interaction with ctnnb1; it reads EFEQYL.

Interacts (via C-terminus) with ctnnb1/beta-catenin (via Armadillo repeats); this interaction is required for inhibition of wnt-signaling. In terms of tissue distribution, enriched in the embryonic endoderm. Expressed in the embryonic gut, with strong expression in the posterior gut during tailbud stages. Expressed at a low level in the adult kidney and spleen.

Its subcellular location is the nucleus. Transcription activator. Binds to the DNA sequence 5'-AACAAT-3'. All of the sox17 proteins are required for embryonic endoderm development and gastrulation movements, and show some redundancy in function. In addition, the sox17 proteins have distinct but overlapping roles in later gut development. Acts downstream of vegt-signaling in endoderm differentiation to induce a range of endodermal genes both directly (including endodermin and dhh/chh) and indirectly. Also represses wnt-responsive genes to inhibit wnt/beta-catenin signaling. The polypeptide is Transcription factor Sox-17-alpha-B (sox17a-b) (Xenopus laevis (African clawed frog)).